A 185-amino-acid chain; its full sequence is Superoxide dismutase [Cu-Zn] (185 aa).

Residues 1 to 18 form the signal peptide; the sequence is MTAFYKLCGMSMLSLVLA. 3 residues coordinate Cu cation: His-85, His-87, and His-102. Cys-92 and Cys-180 are joined by a disulfide. Residues His-102, His-111, His-120, and Asp-123 each contribute to the Zn(2+) site. His-158 lines the Cu cation pocket.

The protein belongs to the Cu-Zn superoxide dismutase family. In terms of assembly, homodimer. Requires Cu cation as cofactor. It depends on Zn(2+) as a cofactor.

The protein resides in the periplasm. It carries out the reaction 2 superoxide + 2 H(+) = H2O2 + O2. Functionally, destroys radicals which are normally produced within the cells and which are toxic to biological systems. This Francisella tularensis subsp. holarctica (strain LVS) protein is Superoxide dismutase [Cu-Zn] (sodC).